We begin with the raw amino-acid sequence, 372 residues long: BTB/POZ and TAZ domain-containing protein 4 (372 aa).

A disordered region spans residues 14–37; that stretch reads SADSSSVPIPPPLPSKSDGLKKKL. Residues 60-128 form the BTB domain; that stretch reads ADVVIYTDNG…LYSSCYEKEE (69 aa). The TAZ-type zinc finger occupies 238–330; that stretch reads RIYSQLYEAM…SDQCRVPLCR (93 aa). The segment at 341 to 364 is caM-binding; it reads KKDESRWKLLVKNVLGSKKIGGSP.

As to quaternary structure, interacts with GTE11/BET10 through the BTB domain. In terms of tissue distribution, preferentially expressed in leaves, stems and flowers.

The protein resides in the cytoplasm. It participates in protein modification; protein ubiquitination. Its function is as follows. May act as a substrate-specific adapter of an E3 ubiquitin-protein ligase complex (CUL3-RBX1-BTB) which mediates the ubiquitination and subsequent proteasomal degradation of target proteins. In Arabidopsis thaliana (Mouse-ear cress), this protein is BTB/POZ and TAZ domain-containing protein 4 (BT4).